Consider the following 483-residue polypeptide: uncharacterized protein (483 aa).

Positions 11 to 71 (RYRKGDIIEL…SRYLEARAIE (61 aa)) constitute a TRAM domain. Residues C84, C90, C93, and C187 each contribute to the [4Fe-4S] cluster site. Residues Q312, Y341, E362, and D412 each coordinate S-adenosyl-L-methionine. The active-site Nucleophile is C439.

This sequence belongs to the class I-like SAM-binding methyltransferase superfamily. RNA M5U methyltransferase family.

This is an uncharacterized protein from Chlorobaculum tepidum (strain ATCC 49652 / DSM 12025 / NBRC 103806 / TLS) (Chlorobium tepidum).